Here is a 476-residue protein sequence, read N- to C-terminus: Ribulose bisphosphate carboxylase large chain (476 aa).

Positions 1 to 2 (MS) are excised as a propeptide. Position 3 is an N-acetylproline (Pro-3). Lys-14 bears the N6,N6,N6-trimethyllysine mark. Residues Asn-123 and Thr-173 each coordinate substrate. Lys-175 serves as the catalytic Proton acceptor. Residue Lys-177 coordinates substrate. Lys-201, Asp-203, and Glu-204 together coordinate Mg(2+). Lys-201 bears the N6-carboxylysine mark. 3 residues coordinate substrate: Arg-295, His-327, and Ser-379.

The protein belongs to the RuBisCO large chain family. Type I subfamily. As to quaternary structure, heterohexadecamer of 8 large chains and 8 small chains; disulfide-linked. The disulfide link is formed within the large subunit homodimers. Mg(2+) is required as a cofactor. In terms of processing, the disulfide bond which can form in the large chain dimeric partners within the hexadecamer appears to be associated with oxidative stress and protein turnover.

It is found in the plastid. The protein resides in the chloroplast. The enzyme catalyses 2 (2R)-3-phosphoglycerate + 2 H(+) = D-ribulose 1,5-bisphosphate + CO2 + H2O. It catalyses the reaction D-ribulose 1,5-bisphosphate + O2 = 2-phosphoglycolate + (2R)-3-phosphoglycerate + 2 H(+). In terms of biological role, ruBisCO catalyzes two reactions: the carboxylation of D-ribulose 1,5-bisphosphate, the primary event in carbon dioxide fixation, as well as the oxidative fragmentation of the pentose substrate in the photorespiration process. Both reactions occur simultaneously and in competition at the same active site. The polypeptide is Ribulose bisphosphate carboxylase large chain (Barnadesia caryophylla (Xenophontia caryophylla)).